Reading from the N-terminus, the 151-residue chain is Ribosome maturation factor RimP (151 aa).

It belongs to the RimP family.

The protein localises to the cytoplasm. In terms of biological role, required for maturation of 30S ribosomal subunits. The polypeptide is Ribosome maturation factor RimP (Caldicellulosiruptor saccharolyticus (strain ATCC 43494 / DSM 8903 / Tp8T 6331)).